The primary structure comprises 75 residues: Large ribosomal subunit protein bL31 (75 aa).

The protein belongs to the bacterial ribosomal protein bL31 family. Type A subfamily. As to quaternary structure, part of the 50S ribosomal subunit.

Its function is as follows. Binds the 23S rRNA. The chain is Large ribosomal subunit protein bL31 from Acidiphilium cryptum (strain JF-5).